The primary structure comprises 90 residues: Antitoxin epsilon 2 (90 aa).

This sequence belongs to the epsilon antitoxin family. In terms of assembly, in the presence of the zeta toxin, forms an inactive PezA(2)PezT(2) heterotetramer.

In terms of biological role, antitoxin component of a type II toxin-antitoxin (TA) system. Neutralizes the toxic effect of zeta toxin. Part of a postsegregational killing (PSK) system involved in the killing of plasmid-free cells. Continuous synthesis of the epsilon antitoxin is required to counteract the zeta toxin. The polypeptide is Antitoxin epsilon 2 (Enterococcus faecalis (Streptococcus faecalis)).